The sequence spans 456 residues: 3-isopropylmalate dehydratase large subunit (456 aa).

3 residues coordinate [4Fe-4S] cluster: Cys-336, Cys-396, and Cys-399.

Belongs to the aconitase/IPM isomerase family. LeuC type 1 subfamily. Heterodimer of LeuC and LeuD. It depends on [4Fe-4S] cluster as a cofactor.

It catalyses the reaction (2R,3S)-3-isopropylmalate = (2S)-2-isopropylmalate. Its pathway is amino-acid biosynthesis; L-leucine biosynthesis; L-leucine from 3-methyl-2-oxobutanoate: step 2/4. Catalyzes the isomerization between 2-isopropylmalate and 3-isopropylmalate, via the formation of 2-isopropylmaleate. The protein is 3-isopropylmalate dehydratase large subunit of Staphylococcus epidermidis (strain ATCC 12228 / FDA PCI 1200).